Reading from the N-terminus, the 500-residue chain is Cytochrome P450 71B9 (500 aa).

Residues 1–21 (MATIWFLSLLFLCCILLAAFK) form a helical membrane-spanning segment. Cysteine 440 contributes to the heme binding site.

It belongs to the cytochrome P450 family. It depends on heme as a cofactor.

The protein resides in the membrane. The polypeptide is Cytochrome P450 71B9 (CYP71B9) (Arabidopsis thaliana (Mouse-ear cress)).